The primary structure comprises 2298 residues: Protein Ycf2 (2298 aa).

1637–1644 (GSIGTGRS) serves as a coordination point for ATP.

The protein belongs to the Ycf2 family.

The protein resides in the plastid. It localises to the chloroplast stroma. Its function is as follows. Probable ATPase of unknown function. Its presence in a non-photosynthetic plant (Epifagus virginiana) and experiments in tobacco indicate that it has an essential function which is probably not related to photosynthesis. This Lotus japonicus (Lotus corniculatus var. japonicus) protein is Protein Ycf2.